A 491-amino-acid chain; its full sequence is Probable glycine dehydrogenase (decarboxylating) subunit 2 (491 aa).

N6-(pyridoxal phosphate)lysine is present on Lys-274.

The protein belongs to the GcvP family. C-terminal subunit subfamily. The glycine cleavage system is composed of four proteins: P, T, L and H. In this organism, the P 'protein' is a heterodimer of two subunits. Pyridoxal 5'-phosphate serves as cofactor.

The catalysed reaction is N(6)-[(R)-lipoyl]-L-lysyl-[glycine-cleavage complex H protein] + glycine + H(+) = N(6)-[(R)-S(8)-aminomethyldihydrolipoyl]-L-lysyl-[glycine-cleavage complex H protein] + CO2. The glycine cleavage system catalyzes the degradation of glycine. The P protein binds the alpha-amino group of glycine through its pyridoxal phosphate cofactor; CO(2) is released and the remaining methylamine moiety is then transferred to the lipoamide cofactor of the H protein. This is Probable glycine dehydrogenase (decarboxylating) subunit 2 from Shouchella clausii (strain KSM-K16) (Alkalihalobacillus clausii).